The chain runs to 835 residues: Protein translocase subunit SecA (835 aa).

Residues Q85, 103–107, and D492 contribute to the ATP site; that span reads GEGKT. Residues 788–807 are disordered; it reads VQGEAVHPSSDGEEAKKKPV. Zn(2+)-binding residues include C819, C821, C830, and C831.

The protein belongs to the SecA family. In terms of assembly, monomer and homodimer. Part of the essential Sec protein translocation apparatus which comprises SecA, SecYEG and auxiliary proteins SecDF. Other proteins may also be involved. Requires Zn(2+) as cofactor.

It is found in the cell membrane. It localises to the cytoplasm. It catalyses the reaction ATP + H2O + cellular proteinSide 1 = ADP + phosphate + cellular proteinSide 2.. Its function is as follows. Part of the Sec protein translocase complex. Interacts with the SecYEG preprotein conducting channel. Has a central role in coupling the hydrolysis of ATP to the transfer of proteins into and across the cell membrane, serving as an ATP-driven molecular motor driving the stepwise translocation of polypeptide chains across the membrane. The protein is Protein translocase subunit SecA of Bacillus cereus (strain G9842).